A 204-amino-acid polypeptide reads, in one-letter code: Leucyl/phenylalanyl-tRNA--protein transferase (204 aa).

The protein belongs to the L/F-transferase family.

The protein localises to the cytoplasm. The catalysed reaction is N-terminal L-lysyl-[protein] + L-leucyl-tRNA(Leu) = N-terminal L-leucyl-L-lysyl-[protein] + tRNA(Leu) + H(+). The enzyme catalyses N-terminal L-arginyl-[protein] + L-leucyl-tRNA(Leu) = N-terminal L-leucyl-L-arginyl-[protein] + tRNA(Leu) + H(+). It catalyses the reaction L-phenylalanyl-tRNA(Phe) + an N-terminal L-alpha-aminoacyl-[protein] = an N-terminal L-phenylalanyl-L-alpha-aminoacyl-[protein] + tRNA(Phe). Functions in the N-end rule pathway of protein degradation where it conjugates Leu, Phe and, less efficiently, Met from aminoacyl-tRNAs to the N-termini of proteins containing an N-terminal arginine or lysine. The chain is Leucyl/phenylalanyl-tRNA--protein transferase from Rhizobium johnstonii (strain DSM 114642 / LMG 32736 / 3841) (Rhizobium leguminosarum bv. viciae).